Consider the following 84-residue polypeptide: Sulfur carrier protein TusA (84 aa).

C19 functions as the Cysteine persulfide intermediate in the catalytic mechanism.

This sequence belongs to the sulfur carrier protein TusA family. Interacts with IscS.

Its subcellular location is the cytoplasm. It participates in tRNA modification. Its function is as follows. Sulfur carrier protein involved in sulfur trafficking in the cell. Part of a sulfur-relay system required for 2-thiolation during synthesis of 2-thiouridine of the modified wobble base 5-methylaminomethyl-2-thiouridine (mnm(5)s(2)U) in tRNA. Interacts with IscS and stimulates its cysteine desulfurase activity. Accepts an activated sulfur from IscS, which is then transferred to TusD, and thus determines the direction of sulfur flow from IscS to 2-thiouridine formation. Also appears to be involved in sulfur transfer for the biosynthesis of molybdopterin. The polypeptide is Sulfur carrier protein TusA (Photorhabdus laumondii subsp. laumondii (strain DSM 15139 / CIP 105565 / TT01) (Photorhabdus luminescens subsp. laumondii)).